Consider the following 228-residue polypeptide: Ankyrin repeat domain-containing protein 46 (228 aa).

4 ANK repeats span residues 11–40 (QTSV…DPNI), 44–73 (RGRT…DLLA), 77–103 (QGNT…KIDI), and 107–138 (NGST…EVKG). The helical transmembrane segment at 195–215 (VLLLLVVIALLSLGIAYYVSG) threads the bilayer.

It is found in the membrane. The chain is Ankyrin repeat domain-containing protein 46 (ankrd46) from Danio rerio (Zebrafish).